We begin with the raw amino-acid sequence, 450 residues long: Tyrosine-protein kinase CSK (450 aa).

N-acetylserine is present on Ser-2. One can recognise an SH3 domain in the interval 9-70 (PSGTECIAKY…PANYVQKREG (62 aa)). The interval 9–70 (PSGTECIAKY…PANYVQKREG (62 aa)) is interaction with PTPN22. The region spanning 82–171 (WFHGKITREQ…GLCTRLIKPK (90 aa)) is the SH2 domain. Tyr-184 bears the Phosphotyrosine mark. Positions 195–449 (LKLLQTIGKG…LEHIKTHELH (255 aa)) constitute a Protein kinase domain. ATP contacts are provided by residues 201–209 (IGKGEFGDV) and Lys-222. Residue Tyr-304 is modified to Phosphotyrosine. The active-site Proton acceptor is Asp-314. Ser-364 is modified (phosphoserine; by PKA). Position 416 is a phosphotyrosine; by autocatalysis (Tyr-416).

Belongs to the protein kinase superfamily. Tyr protein kinase family. CSK subfamily. As to quaternary structure, homodimer (via SH3-domain). Interacts with PTPN22. Interacts with phosphorylated SIT1, PAG1, LIME1 and TGFB1I1; these interactions serve to recruit CSK to the membrane where it can phosphorylate and inhibit Src-family kinases. Interacts with SRCIN1. Interacts with RHOH. Interacts (via SH2 domain) with SCIMP; this interaction is dependent on phosphorylation of SCIMP 'Tyr-107'. Interacts (via SH2 domain) with PRAG1 (when phosphorylated at 'Tyr-391'); this interaction prevents translocation of CSK from the cytoplasm to the membrane leading to increased activity of CSK. Interacts with LRRK1. Requires Mg(2+) as cofactor. Mn(2+) is required as a cofactor. In terms of processing, phosphorylated at Ser-364 by PKA, leading to increased activity. Autophosphorylated. As to expression, expressed in lung and macrophages.

The protein localises to the cytoplasm. Its subcellular location is the cell membrane. It carries out the reaction L-tyrosyl-[protein] + ATP = O-phospho-L-tyrosyl-[protein] + ADP + H(+). Its function is as follows. Non-receptor tyrosine-protein kinase that plays an important role in the regulation of cell growth, differentiation, migration and immune response. Phosphorylates tyrosine residues located in the C-terminal tails of Src-family kinases (SFKs) including LCK, SRC, HCK, FYN, LYN, CSK or YES1. Upon tail phosphorylation, Src-family members engage in intramolecular interactions between the phosphotyrosine tail and the SH2 domain that result in an inactive conformation. To inhibit SFKs, CSK is recruited to the plasma membrane via binding to transmembrane proteins or adapter proteins located near the plasma membrane. Suppresses signaling by various surface receptors, including T-cell receptor (TCR) and B-cell receptor (BCR) by phosphorylating and maintaining inactive several positive effectors such as FYN or LCK. This chain is Tyrosine-protein kinase CSK (CSK), found in Homo sapiens (Human).